Consider the following 352-residue polypeptide: Extracellular minor metalloprotease (352 aa).

Disordered regions lie at residues 41-86 (GNKP…QPRR) and 144-164 (TARS…ELTH). Over residues 48–57 (PTEKNARAGE) the composition is skewed to basic and acidic residues. 2 stretches are compositionally biased toward low complexity: residues 71-85 (ARQT…QQPR) and 144-156 (TARS…SPST). His-160 contacts Zn(2+). Residue Glu-161 is part of the active site. Positions 164 and 184 each coordinate Zn(2+). Catalysis depends on His-262, which acts as the Proton donor. The tract at residues 303 to 325 (TPTSDHLRPRHGETRAGLRTKRG) is disordered. Residues 304–325 (PTSDHLRPRHGETRAGLRTKRG) show a composition bias toward basic and acidic residues.

The protein belongs to the peptidase M4 family. Zn(2+) is required as a cofactor.

It is found in the secreted. In Serratia marcescens (strain ATCC 21074 / E-15), this protein is Extracellular minor metalloprotease (smp).